The sequence spans 981 residues: Ephrin type-A receptor 3 (981 aa).

A signal peptide spans 1–20; sequence MALFRIYSFLAPFHILVLCQ. Topologically, residues 21 to 545 are extracellular; sequence ALRNYPDNEV…LAVGDPNQQT (525 aa). Positions 29 to 210 constitute an Eph LBD domain; the sequence is EVTLLDSMSA…FYKRCPLAVL (182 aa). Fibronectin type-III domains are found at residues 328–441 and 442–533; these read PPSA…TSQT and VSVI…TSHE. N340, N410, N435, and N485 each carry an N-linked (GlcNAc...) asparagine glycan. A helical membrane pass occupies residues 546–566; it reads ILAISVAGGAVLLVLLVACFI. Topologically, residues 567 to 981 are cytoplasmic; it reads VSGRRCGYIK…QAHHGTQVQV (415 aa). 2 positions are modified to phosphotyrosine; by autocatalysis: Y601 and Y607. The Protein kinase domain maps to 626 to 887; it reads IRIERVIGAG…QIVNTLDRLI (262 aa). ATP is bound by residues 633–638, K658, and 705–711; these read GAGEFG and EYMENGS. Y706 carries the post-translational modification Phosphotyrosine; by autocatalysis. Catalysis depends on D751, which acts as the Proton acceptor. 755 to 756 lines the ATP pocket; that stretch reads RN. 2 positions are modified to phosphotyrosine; by autocatalysis: Y784 and Y927. The SAM domain maps to 910 to 974; sequence AAVNTVEDWL…LSSIQCLQAH (65 aa). The PDZ-binding signature appears at 979–981; that stretch reads VQV.

It belongs to the protein kinase superfamily. Tyr protein kinase family. Ephrin receptor subfamily. In terms of assembly, heterotetramer upon binding of the ligand. The heterotetramer is composed of an ephrin dimer and a receptor dimer. Oligomerization is probably required to induce biological responses. Autophosphorylates upon activation by efna5. In terms of tissue distribution, widely expressed in the developing zebrafish nervous system.

The protein resides in the cell membrane. The enzyme catalyses L-tyrosyl-[protein] + ATP = O-phospho-L-tyrosyl-[protein] + ADP + H(+). In terms of biological role, receptor tyrosine kinase which binds promiscuously membrane-bound ephrin family ligands residing on adjacent cells, leading to contact-dependent bidirectional signaling into neighboring cells. The signaling pathway downstream of the receptor is referred to as forward signaling while the signaling pathway downstream of the ephrin ligand is referred to as reverse signaling. Highly promiscuous for ephrin-A ligands it binds preferentially efna5. Upon activation by efna5 regulates cell-cell adhesion, cytoskeletal organization and cell migration. Plays a role in cardiac cells migration and differentiation probably through activation by efna1. Involved in the retinotectal mapping of neurons. May also control the segregation but not the guidance of motor and sensory axons during neuromuscular circuit development. This is Ephrin type-A receptor 3 (epha3) from Danio rerio (Zebrafish).